The following is a 27-amino-acid chain: Kunitz-type serine protease inhibitor 3 (27 aa).

In terms of domain architecture, BPTI/Kunitz inhibitor spans 1–27 (EVHNFACLGKPDPGGCAHYIYRRYYYV).

It is found in the secreted. Inhibits bovine trypsin and human neutrophil elastase. This chain is Kunitz-type serine protease inhibitor 3, found in Rhipicephalus microplus (Cattle tick).